The primary structure comprises 464 residues: Argininosuccinate lyase (464 aa).

Belongs to the lyase 1 family. Argininosuccinate lyase subfamily.

The protein resides in the cytoplasm. It carries out the reaction 2-(N(omega)-L-arginino)succinate = fumarate + L-arginine. Its pathway is amino-acid biosynthesis; L-arginine biosynthesis; L-arginine from L-ornithine and carbamoyl phosphate: step 3/3. The chain is Argininosuccinate lyase from Pseudomonas syringae pv. tomato (strain ATCC BAA-871 / DC3000).